Consider the following 670-residue polypeptide: uncharacterized protein (670 aa).

The next 10 helical transmembrane spans lie at 23–42 (YALRNTIAMCLALTVAYYLN), 47–69 (YWAMTSAAVVSFPTVGGVISKSL), 76–98 (LLGAIAALLLAGHTLNEPWFFLL), 118–140 (VAYAFQLAGYTAAIIAFPMVNIT), 153–170 (VCEVIVGILCGGMMMMIL), 381–403 (QWDAGANALTLAAISCVLYSAVA), 410–432 (SLLMRTLVLLSLFSFVVKFGLMV), 437–454 (LWQFLLFLFPLLATMQLL), 461–483 (FAALWGQLIVFMGSFIAVTNPPV), and 493–510 (NLAKIVGVALAWLAFAIL).

It belongs to the aromatic acid exporter ArAE (TC 2.A.85) family.

It is found in the cell membrane. This is an uncharacterized protein from Escherichia coli O157:H7.